Consider the following 347-residue polypeptide: DNA-directed RNA polymerase subunit alpha (347 aa).

The alpha N-terminal domain (alpha-NTD) stretch occupies residues 1 to 243 (MLFREGTRLI…DQISVFINFD (243 aa)). Positions 255-347 (SGSSDLNDNL…EWKRKQHHEA (93 aa)) are alpha C-terminal domain (alpha-CTD).

It belongs to the RNA polymerase alpha chain family. As to quaternary structure, homodimer. The RNAP catalytic core consists of 2 alpha, 1 beta, 1 beta' and 1 omega subunit. When a sigma factor is associated with the core the holoenzyme is formed, which can initiate transcription.

It catalyses the reaction RNA(n) + a ribonucleoside 5'-triphosphate = RNA(n+1) + diphosphate. Functionally, DNA-dependent RNA polymerase catalyzes the transcription of DNA into RNA using the four ribonucleoside triphosphates as substrates. This is DNA-directed RNA polymerase subunit alpha from Lawsonia intracellularis (strain PHE/MN1-00).